A 148-amino-acid polypeptide reads, in one-letter code: MMVEKVVGNITTLEKRVPHIERVYMRSDDLVKRVKRVVTDHGKEIGIRLKEHQELQDGDILYMDDHNMIVISVLEDDVLTIKPTSMQQMGEIAHQLGNRHLPAQFEGNEMIVQYDYLVEELLQKLSIPFTRENRKMKQAFRPIGHRHE.

It belongs to the UreE family.

The protein localises to the cytoplasm. Functionally, involved in urease metallocenter assembly. Binds nickel. Probably functions as a nickel donor during metallocenter assembly. This Bacillus sp. (strain TB-90) protein is Urease accessory protein UreE.